Consider the following 30-residue polypeptide: Kalata-B14 (30 aa).

The segment at residues 1–30 (GLPVCGESCFGGTCNTPGCACDPWPVCTRD) is a cross-link (cyclopeptide (Gly-Asp)). Disulfide bonds link Cys-5–Cys-19, Cys-9–Cys-21, and Cys-14–Cys-27.

This is a cyclic peptide.

Its function is as follows. Probably participates in a plant defense mechanism. This is Kalata-B14 from Oldenlandia affinis.